Here is a 315-residue protein sequence, read N- to C-terminus: Transaldolase (315 aa).

K131 functions as the Schiff-base intermediate with substrate in the catalytic mechanism.

It belongs to the transaldolase family. Type 1 subfamily. Homodimer.

It localises to the cytoplasm. The catalysed reaction is D-sedoheptulose 7-phosphate + D-glyceraldehyde 3-phosphate = D-erythrose 4-phosphate + beta-D-fructose 6-phosphate. It participates in carbohydrate degradation; pentose phosphate pathway; D-glyceraldehyde 3-phosphate and beta-D-fructose 6-phosphate from D-ribose 5-phosphate and D-xylulose 5-phosphate (non-oxidative stage): step 2/3. Functionally, transaldolase is important for the balance of metabolites in the pentose-phosphate pathway. This is Transaldolase from Actinobacillus pleuropneumoniae serotype 7 (strain AP76).